Reading from the N-terminus, the 371-residue chain is Cytochrome b (371 aa).

Transmembrane regions (helical) follow at residues 25-45 (FGSM…FLAV), 69-90 (WMVQ…YIHI), 105-125 (WLSG…GYVL), and 170-190 (FFAL…LHVL). Heme b contacts are provided by histidine 75 and histidine 89. Heme b is bound by residues histidine 174 and histidine 188. Residue histidine 193 participates in a ubiquinone binding. A run of 4 helical transmembrane segments spans residues 218–238 (MKDL…ISFF), 280–300 (LGGA…PFIH), 312–332 (LMQL…WAAT), and 339–358 (FISI…ISNP).

Belongs to the cytochrome b family. In terms of assembly, the cytochrome bc1 complex contains 3 respiratory subunits (MT-CYB, CYC1 and UQCRFS1), 2 core proteins (UQCRC1 and UQCRC2) and probably 6 low-molecular weight proteins. The cofactor is heme b.

The protein localises to the mitochondrion inner membrane. Functionally, component of the ubiquinol-cytochrome c reductase complex (complex III or cytochrome b-c1 complex) that is part of the mitochondrial respiratory chain. The b-c1 complex mediates electron transfer from ubiquinol to cytochrome c. Contributes to the generation of a proton gradient across the mitochondrial membrane that is then used for ATP synthesis. This is Cytochrome b (MT-CYB) from Boa constrictor (Boa).